The sequence spans 59 residues: uncharacterized protein (59 aa).

This is an uncharacterized protein from Dictyostelium discoideum (Social amoeba).